The primary structure comprises 399 residues: Elongation factor Tu (399 aa).

Residues 10–207 enclose the tr-type G domain; it reads KPHVNVGTIG…ALDSYIPEPV (198 aa). Positions 19–26 are G1; it reads GHIDHGKT. 19–26 provides a ligand contact to GTP; that stretch reads GHIDHGKT. T26 is a Mg(2+) binding site. Residues 60–64 form a G2 region; it reads GITIN. The tract at residues 81 to 84 is G3; that stretch reads DCPG. GTP-binding positions include 81–85 and 136–139; these read DCPGH and NKVD. The G4 stretch occupies residues 136 to 139; that stretch reads NKVD. The G5 stretch occupies residues 174-176; it reads SAL.

It belongs to the TRAFAC class translation factor GTPase superfamily. Classic translation factor GTPase family. EF-Tu/EF-1A subfamily. As to quaternary structure, monomer.

The protein resides in the cytoplasm. The enzyme catalyses GTP + H2O = GDP + phosphate + H(+). GTP hydrolase that promotes the GTP-dependent binding of aminoacyl-tRNA to the A-site of ribosomes during protein biosynthesis. This is Elongation factor Tu from Pseudothermotoga lettingae (strain ATCC BAA-301 / DSM 14385 / NBRC 107922 / TMO) (Thermotoga lettingae).